Reading from the N-terminus, the 172-residue chain is R-phycocyanin-1 beta chain (172 aa).

N72 is subject to N4-methylasparagine. C82 is a (2R,3E)-phycocyanobilin binding site. C153 serves as a coordination point for (2R,3E)-phycoerythrobilin.

Belongs to the phycobiliprotein family. As to quaternary structure, heterodimer of an alpha and a beta chain. Dimers further assemble into trimers and the trimers into hexamers. The basic functional unit of phycobiliproteins is a ring-shaped hexamer formed from two back-to-back trimers contacting via the alpha chain subunits. The trimers are composed of alpha/beta subunit heterodimers arranged around a three-fold axis of symmetry. The phycoerythrins also contain a gamma subunit which is located in the center of the hexamer. Post-translationally, contains two covalently linked bilin chromophores.

Its subcellular location is the plastid. The protein resides in the chloroplast thylakoid membrane. Light-harvesting photosynthetic bile pigment-protein from the phycobiliprotein complex (phycobilisome, PBS). Phycocyanin is the major phycobiliprotein in the PBS rod. The protein is R-phycocyanin-1 beta chain (rpcB) of Porphyridium purpureum (Red alga).